Reading from the N-terminus, the 278-residue chain is Insulin-like growth factor-binding protein-like 1 (278 aa).

An N-terminal signal peptide occupies residues 1–25; the sequence is MPRLSLLLPLLLLLLLPLLPPLSPS. The IGFBP N-terminal domain occupies 34–109; it reads RRPKCGPCRP…PEGTGLCVCA (76 aa). 7 disulfide bridges follow: Cys38–Cys63, Cys41–Cys65, Cys46–Cys66, Cys52–Cys69, Cys77–Cys91, Cys85–Cys106, and Cys115–Cys151. In terms of domain architecture, Kazal-like spans 95–153; sequence AAGAAPEGTGLCVCAQRGTVCGSDGRSYPSVCALRLRARHTPRAHPGHLHKARDGPCEF. Residues 155–259 enclose the Ig-like C2-type domain; sequence PVVVVPPRSV…GEAESHSTVT (105 aa). Asn166 is a glycosylation site (N-linked (GlcNAc...) asparagine). Cys176 and Cys243 are oxidised to a cystine.

In terms of tissue distribution, expressed at the highest level in both brain and testis, with lower levels in the prostate, bladder and lung.

It is found in the secreted. In terms of biological role, IGF-binding proteins prolong the half-life of IGFs and have been shown to either inhibit or stimulate the growth promoting effects of the IGFs in cell culture. They alter the interaction of IGFs with their cell surface receptors. May be a putative tumor suppressor protein. This Homo sapiens (Human) protein is Insulin-like growth factor-binding protein-like 1 (IGFBPL1).